Consider the following 660-residue polypeptide: Solute carrier family 5 member 4B (660 aa).

Topologically, residues 1 to 27 are cytoplasmic; that stretch reads MASTLSPSITPQTEEPPVVPVRIQNAA. The chain crosses the membrane as a helical span at residues 28-48; sequence DISVIVIYFIVVLAVGLWSMV. Residues 49-54 lie on the Extracellular side of the membrane; that stretch reads RSNRGT. Residues 55–75 traverse the membrane as a helical segment; it reads VGGFFLAGHDMAWWPMGASLF. Topologically, residues 76–82 are cytoplasmic; that stretch reads ASNIGSN. Residues 83 to 103 traverse the membrane as a helical segment; that stretch reads HFVGLAGTGAASGIAIAAVEW. Residues 104–105 are Extracellular-facing; sequence NA. A helical membrane pass occupies residues 106-126; the sequence is LLMVLVLGWVFLPIYIKAGVL. Topologically, residues 127-142 are cytoplasmic; that stretch reads TMPEYLRKRFGGKRLQ. Residues 143–163 traverse the membrane as a helical segment; the sequence is IYLSVLSLFIMVALQTSSIIF. The Extracellular portion of the chain corresponds to 164-166; the sequence is SGA. The chain crosses the membrane as a helical span at residues 167 to 187; it reads IFIQLALGLNLYLAVFILLAI. The Cytoplasmic segment spans residues 188–208; it reads TAFYTVAGGLASVIYTDSVQT. The helical transmembrane segment at 209 to 229 threads the bilayer; it reads FIMLLGSLILMGFAFAEVGGY. The Extracellular portion of the chain corresponds to 230–277; it reads ESFTEKYMNAIPSVVEGDNLTISPKCYTPQPDSFHVFRDPVTGDIPWP. A helical membrane pass occupies residues 278–298; sequence GLIFGMTILAIWYWCADQVIV. Topologically, residues 299-313 are cytoplasmic; the sequence is QRCLCGKNMSHVKAA. A helical transmembrane segment spans residues 314–334; the sequence is CILCGYLKLLPMFLMVMPGMI. Residues 335-380 lie on the Extracellular side of the membrane; the sequence is SRILYTDKVACVVPSECEKQCGTAVGCTNYAYPTLVLELMPDGLRG. The helical transmembrane segment at 381–401 threads the bilayer; that stretch reads LMLSVMLASLMSSLTSIFNSA. Over 402 to 423 the chain is Cytoplasmic; that stretch reads STLFTIDLYTKIRKKASERELM. Residues 424–444 traverse the membrane as a helical segment; that stretch reads IAGRIFGMVLIAVSILWVPLV. Residues 445-455 are Extracellular-facing; that stretch reads QVSQNGQLFHY. The chain crosses the membrane as a helical span at residues 456–476; it reads IGSVSSYLGPPLGAVFMLAIF. The Cytoplasmic segment spans residues 477-484; it reads FKRVNEQG. A helical transmembrane segment spans residues 485-505; that stretch reads AFWGLMVGLVVGLIRLIAEFV. Topologically, residues 506–526 are extracellular; the sequence is YGTGSCVAPSNCPKIICGVHY. Residues 527-547 form a helical membrane-spanning segment; the sequence is MYFAIILFFVSIIVILGVSFL. At 548-639 the chain is on the cytoplasmic side; it reads TEPIPDVHLY…DTSEKPLWRT (92 aa). The chain crosses the membrane as a helical span at residues 640-660; it reads VMNINAVLLLGVAVFVHAYFA.

Belongs to the sodium:solute symporter (SSF) (TC 2.A.21) family. As to expression, expressed in small intestine. Expressed in kidney.

It localises to the cell membrane. The catalysed reaction is D-glucose(out) + 2 Na(+)(out) = D-glucose(in) + 2 Na(+)(in). With respect to regulation, inhibited by phlorizin. Functionally, low-affinity sodium/D-glucose symporter. Generates D-glucose-induced depolarization in a pH-independent manner. The chain is Solute carrier family 5 member 4B from Mus musculus (Mouse).